Here is a 299-residue protein sequence, read N- to C-terminus: Oxygen-dependent coproporphyrinogen-III oxidase (299 aa).

S92 is a binding site for substrate. Residues H96 and H106 each contribute to the Mn(2+) site. Residue H106 is the Proton donor of the active site. 108–110 contributes to the substrate binding site; sequence NVR. Positions 145 and 175 each coordinate Mn(2+). An important for dimerization region spans residues 240–275; that stretch reads YVEFNLVWDRGTLFGLQTGGRTESILMSMPPLVRWE. 258–260 lines the substrate pocket; it reads GGR.

This sequence belongs to the aerobic coproporphyrinogen-III oxidase family. As to quaternary structure, homodimer. Requires Mn(2+) as cofactor.

The protein localises to the cytoplasm. The enzyme catalyses coproporphyrinogen III + O2 + 2 H(+) = protoporphyrinogen IX + 2 CO2 + 2 H2O. It participates in porphyrin-containing compound metabolism; protoporphyrin-IX biosynthesis; protoporphyrinogen-IX from coproporphyrinogen-III (O2 route): step 1/1. In terms of biological role, involved in the heme biosynthesis. Catalyzes the aerobic oxidative decarboxylation of propionate groups of rings A and B of coproporphyrinogen-III to yield the vinyl groups in protoporphyrinogen-IX. This Escherichia coli O157:H7 protein is Oxygen-dependent coproporphyrinogen-III oxidase.